A 169-amino-acid chain; its full sequence is Ribosomal RNA large subunit methyltransferase H (169 aa).

S-adenosyl-L-methionine-binding positions include leucine 85, glycine 117, and 136-141; that span reads LGELTW.

Belongs to the RNA methyltransferase RlmH family. In terms of assembly, homodimer.

Its subcellular location is the cytoplasm. It catalyses the reaction pseudouridine(1915) in 23S rRNA + S-adenosyl-L-methionine = N(3)-methylpseudouridine(1915) in 23S rRNA + S-adenosyl-L-homocysteine + H(+). Its function is as follows. Specifically methylates the pseudouridine at position 1915 (m3Psi1915) in 23S rRNA. The protein is Ribosomal RNA large subunit methyltransferase H of Brucella abortus biovar 1 (strain 9-941).